We begin with the raw amino-acid sequence, 1009 residues long: DNA ligase 3 (1009 aa).

The transit peptide at 1–42 directs the protein to the mitochondrion; that stretch reads MSLAFKIFFPQTLRALSRKELCLFRKHHWRDVRQFSQWSETD. The PARP-type zinc finger occupies 93-185; sequence FCVDYAKRGT…QITQHIADLS (93 aa). Cys105, Cys108, His139, and Cys142 together coordinate Zn(2+). A phosphoserine mark is found at Ser210, Ser216, Ser227, and Ser242. The tract at residues 224-256 is disordered; the sequence is RKFSGFSAKPNNSGEAPSSPTPKRSLSSSKCDP. A compositionally biased stretch (low complexity) spans 240–252; sequence PSSPTPKRSLSSS. Interaction with DNA stretches follow at residues 277-280, 318-323, 388-391, and 421-427; these read PSYN, VYNLND, TKED, and KMNSGAK. Glu506 is an ATP binding site. Residue Lys508 is the N6-AMP-lysine intermediate of the active site. ATP-binding residues include Arg513 and Arg528. 2 residues coordinate Mg(2+): Glu560 and Glu655. Lys660, Arg671, and Lys675 together coordinate ATP. A disordered region spans residues 842-917; sequence AGDEGSSTTG…LATKSSPVKV (76 aa). 2 stretches are compositionally biased toward low complexity: residues 845–854 and 863–877; these read EGSSTTGGSS and SAVS…SAST. The segment covering 884–898 has biased composition (polar residues); the sequence is LSNSNSKDGNMQTAK. At Ser913 the chain carries Phosphoserine. The region spanning 933-1009 is the BRCT domain; it reads VLLDIFTGVR…IRKRRLVAPC (77 aa).

Belongs to the ATP-dependent DNA ligase family. Isoform 3 interacts (via BRCT domain) with the nuclear DNA-repair protein XRCC1. Interacts with POLG. Interacts with POLB. Mg(2+) serves as cofactor. In terms of tissue distribution, testis, thymus, prostate and heart.

It localises to the mitochondrion. The protein localises to the nucleus. It carries out the reaction ATP + (deoxyribonucleotide)n-3'-hydroxyl + 5'-phospho-(deoxyribonucleotide)m = (deoxyribonucleotide)n+m + AMP + diphosphate.. Isoform 3 functions as a heterodimer with DNA-repair protein XRCC1 in the nucleus and can correct defective DNA strand-break repair and sister chromatid exchange following treatment with ionizing radiation and alkylating agents. Isoform 1 is targeted to mitochondria, where it functions as a DNA ligase in mitochondrial base-excision DNA repair. The protein is DNA ligase 3 (LIG3) of Homo sapiens (Human).